The sequence spans 533 residues: Zona pellucida sperm-binding protein 3 receptor (533 aa).

The signal sequence occupies residues 1 to 28; it reads MFPRLQAVSAPALLQITLMAVLLAPVLG. Sushi domains lie at 29 to 88, 89 to 150, 151 to 215, 216 to 275, 276 to 342, 343 to 408, and 409 to 467; these read DCGP…FCAK, KRCR…ECVI, VKCD…TCEK, VICR…TCEP, NGCI…GCER, VCCP…ACES, and AVCL…KCEW. 14 disulfides stabilise this stretch: cysteine 30/cysteine 74, cysteine 60/cysteine 86, cysteine 91/cysteine 132, cysteine 118/cysteine 148, cysteine 153/cysteine 196, cysteine 182/cysteine 213, cysteine 218/cysteine 260, cysteine 246/cysteine 273, cysteine 278/cysteine 328, cysteine 312/cysteine 340, cysteine 345/cysteine 393, cysteine 378/cysteine 406, cysteine 411/cysteine 452, and cysteine 438/cysteine 465. Residues asparagine 68 and asparagine 77 are each glycosylated (N-linked (GlcNAc...) asparagine). 3 N-linked (GlcNAc...) asparagine glycosylation sites follow: asparagine 185, asparagine 191, and asparagine 200. Asparagine 433 and asparagine 455 each carry an N-linked (GlcNAc...) asparagine glycan.

As to quaternary structure, homooligomer; disulfide-linked. May contain 6-8 monomers per oligomer. Post-translationally, the N-terminus may be blocked. As to expression, testis. Not expressed in heart, brain, liver or kidney.

The protein localises to the cytoplasmic vesicle. It localises to the secretory vesicle. It is found in the acrosome lumen. Its function is as follows. Probably involved in the formation of the dense core and M1 domain of the acrosome. May also regulate the release of certain secretory proteins following the acrosomal reaction. In Cavia porcellus (Guinea pig), this protein is Zona pellucida sperm-binding protein 3 receptor (ZP3R).